The chain runs to 368 residues: Quinolinate synthase (368 aa).

Iminosuccinate is bound by residues His46 and Ser63. Position 110 (Cys110) interacts with [4Fe-4S] cluster. Iminosuccinate-binding positions include 141–143 and Ser162; that span reads YVN. Cys230 lines the [4Fe-4S] cluster pocket. Iminosuccinate contacts are provided by residues 256 to 258 and Thr273; that span reads HPE. Cys320 contacts [4Fe-4S] cluster.

This sequence belongs to the quinolinate synthase family. Type 3 subfamily. [4Fe-4S] cluster serves as cofactor.

It localises to the cytoplasm. The enzyme catalyses iminosuccinate + dihydroxyacetone phosphate = quinolinate + phosphate + 2 H2O + H(+). The protein operates within cofactor biosynthesis; NAD(+) biosynthesis; quinolinate from iminoaspartate: step 1/1. In terms of biological role, catalyzes the condensation of iminoaspartate with dihydroxyacetone phosphate to form quinolinate. In Bacillus anthracis (strain A0248), this protein is Quinolinate synthase.